The following is a 588-amino-acid chain: Aspartate--tRNA ligase (588 aa).

An L-aspartate-binding site is contributed by Glu174. Residues 198 to 201 (QLFK) form an aspartate region. An L-aspartate-binding site is contributed by Arg220. ATP contacts are provided by residues 220 to 222 (RDE) and Gln229. Residue His448 participates in L-aspartate binding. ATP is bound at residue Glu482. Residue Arg489 coordinates L-aspartate. 534–537 (GIDR) serves as a coordination point for ATP.

Belongs to the class-II aminoacyl-tRNA synthetase family. Type 1 subfamily. In terms of assembly, homodimer.

Its subcellular location is the cytoplasm. It catalyses the reaction tRNA(Asp) + L-aspartate + ATP = L-aspartyl-tRNA(Asp) + AMP + diphosphate. In terms of biological role, catalyzes the attachment of L-aspartate to tRNA(Asp) in a two-step reaction: L-aspartate is first activated by ATP to form Asp-AMP and then transferred to the acceptor end of tRNA(Asp). The protein is Aspartate--tRNA ligase of Xanthomonas campestris pv. campestris (strain 8004).